Here is a 398-residue protein sequence, read N- to C-terminus: Serpin-Z1C (398 aa).

The tract at residues 343-367 (GTEAAASTAIKMALLQARPPSVMDF) is RCL.

This sequence belongs to the serpin family.

In terms of biological role, inhibits chymotrypsin and cathepsin G in vitro. This is Serpin-Z1C from Triticum aestivum (Wheat).